A 262-amino-acid chain; its full sequence is Ribosomal RNA small subunit methyltransferase A (262 aa).

Positions 12, 14, 38, 60, 83, and 102 each coordinate S-adenosyl-L-methionine.

The protein belongs to the class I-like SAM-binding methyltransferase superfamily. rRNA adenine N(6)-methyltransferase family. RsmA subfamily.

It is found in the cytoplasm. The catalysed reaction is adenosine(1518)/adenosine(1519) in 16S rRNA + 4 S-adenosyl-L-methionine = N(6)-dimethyladenosine(1518)/N(6)-dimethyladenosine(1519) in 16S rRNA + 4 S-adenosyl-L-homocysteine + 4 H(+). Its function is as follows. Specifically dimethylates two adjacent adenosines (A1518 and A1519) in the loop of a conserved hairpin near the 3'-end of 16S rRNA in the 30S particle. May play a critical role in biogenesis of 30S subunits. This Pelagibacter ubique (strain HTCC1062) protein is Ribosomal RNA small subunit methyltransferase A.